The following is a 406-amino-acid chain: Renin (406 aa).

The signal sequence occupies residues 1 to 23 (MDGWRRMPRWGLLLLLWGSCTFG). The propeptide at 24–66 (LPTDTTTFKRIFLKRMPSIRESLKERGVDMARLGPEWSQPMKR) is activation peptide. N-linked (GlcNAc...) asparagine glycosylation is present at Asn71. In terms of domain architecture, Peptidase A1 spans 86 to 403 (YYGEIGIGTP…DRRNNRIGFA (318 aa)). Residue Asp104 is part of the active site. Residues Cys117 and Cys124 are joined by a disulfide bond. Asn141 is a glycosylation site (N-linked (GlcNAc...) asparagine). Cys283 and Cys287 are joined by a disulfide. Asp292 is a catalytic residue. A disulfide bridge links Cys325 with Cys362.

Belongs to the peptidase A1 family. Interacts with ATP6AP2.

Its subcellular location is the secreted. It localises to the membrane. The enzyme catalyses Cleavage of Leu-|-Xaa bond in angiotensinogen to generate angiotensin I.. With respect to regulation, interaction with ATP6AP2 results in a 5-fold increased efficiency in angiotensinogen processing. In terms of biological role, renin is a highly specific endopeptidase, whose only known function is to generate angiotensin I from angiotensinogen in the plasma, initiating a cascade of reactions that produce an elevation of blood pressure and increased sodium retention by the kidney. The sequence is that of Renin (REN) from Macaca mulatta (Rhesus macaque).